The primary structure comprises 354 residues: UDP-2,3-diacetamido-2,3-dideoxy-D-glucuronate 2-epimerase (354 aa).

Belongs to the UDP-N-acetylglucosamine 2-epimerase family.

It catalyses the reaction UDP-2,3-diacetamido-2,3-dideoxy-alpha-D-glucuronate = UDP-2,3-diacetamido-2,3-dideoxy-alpha-D-mannuronate. Its pathway is bacterial outer membrane biogenesis; LPS O-antigen biosynthesis. Its function is as follows. Plays a role in the biosynthesis of B-band O antigen for serotype O5. Catalyzes the epimerization of UDP-2,3-diacetamido-2,3-dideoxy-alpha-D-glucuronic acid (UDP-alpha-D-GlcNAc3NAcA) to UDP-2,3-diacetamido-2,3-dideoxy-alpha-D-mannuronic acid (UDP-alpha-D-ManNAc3NAcA). Exhibits high specificity towards the substrate as UDP-alpha-D-GlcNAc, UDP-alpha-D-GlcNAcA (UDP-2-acetamido-2-deoxy-alpha-D-glucuronic acid) and UDP-alpha-D-GlcNAc3NAc (UDP-2,3-diacetamido-2,3-dideoxy-alpha-D-glucose) cannot act as substrates. This Pseudomonas aeruginosa (strain ATCC 15692 / DSM 22644 / CIP 104116 / JCM 14847 / LMG 12228 / 1C / PRS 101 / PAO1) protein is UDP-2,3-diacetamido-2,3-dideoxy-D-glucuronate 2-epimerase.